A 210-amino-acid polypeptide reads, in one-letter code: Large ribosomal subunit protein uL3 (210 aa).

A disordered region spans residues 122–155 (NQKRNNFGRGPMSHGSKNHRAPGSIGAGTTPGRV).

This sequence belongs to the universal ribosomal protein uL3 family. As to quaternary structure, part of the 50S ribosomal subunit. Forms a cluster with proteins L14 and L19.

Its function is as follows. One of the primary rRNA binding proteins, it binds directly near the 3'-end of the 23S rRNA, where it nucleates assembly of the 50S subunit. The sequence is that of Large ribosomal subunit protein uL3 from Nostoc punctiforme (strain ATCC 29133 / PCC 73102).